Consider the following 245-residue polypeptide: Photosystem II protein PSBS2 (245 aa).

Residues 1 to 25 constitute a chloroplast transit peptide; it reads MAMTLSTKAFAQRGVSARKNTVRVY. The next 4 helical transmembrane spans lie at 72-92, 108-128, 185-205, and 217-237; these read LFVG…EILT, GIEV…AAVL, LGFA…LAQF, and EFGL…EGSG.

It belongs to the ELIP/psbS family.

Its subcellular location is the plastid. The protein resides in the chloroplast thylakoid membrane. Required for non-photochemical quenching (NPQ), a mechanism that converts and dissipates the harmful excess absorbed light energy into heat and protect the photosynthetic apparatus from photo-oxidative damage. Seems involved in the activation of NPQ, possibly by promoting conformational changes required for activation of LHCSR3-dependent quenching in the antenna of photosystem II (PSII). The polypeptide is Photosystem II protein PSBS2 (Chlamydomonas reinhardtii (Chlamydomonas smithii)).